Consider the following 129-residue polypeptide: Small ribosomal subunit protein uS11 (129 aa).

This sequence belongs to the universal ribosomal protein uS11 family. Part of the 30S ribosomal subunit. Interacts with proteins S7 and S18. Binds to IF-3.

Located on the platform of the 30S subunit, it bridges several disparate RNA helices of the 16S rRNA. Forms part of the Shine-Dalgarno cleft in the 70S ribosome. The sequence is that of Small ribosomal subunit protein uS11 from Pseudomonas fluorescens (strain SBW25).